Here is a 176-residue protein sequence, read N- to C-terminus: Dynein light chain Tctex-type 5-B (176 aa).

This sequence belongs to the dynein light chain Tctex-type family.

The protein is Dynein light chain Tctex-type 5-B (Dynlt5-b) of Xenopus laevis (African clawed frog).